The primary structure comprises 265 residues: Type III pantothenate kinase (265 aa).

ATP is bound at residue 6–13 (DVGNTHTV). A substrate-binding site is contributed by 112–115 (GADR). The active-site Proton acceptor is Asp-114. Asp-134 serves as a coordination point for K(+). Thr-137 lines the ATP pocket. Residue Thr-189 participates in substrate binding.

Belongs to the type III pantothenate kinase family. Homodimer. NH4(+) serves as cofactor. The cofactor is K(+).

It localises to the cytoplasm. It carries out the reaction (R)-pantothenate + ATP = (R)-4'-phosphopantothenate + ADP + H(+). Its pathway is cofactor biosynthesis; coenzyme A biosynthesis; CoA from (R)-pantothenate: step 1/5. Its function is as follows. Catalyzes the phosphorylation of pantothenate (Pan), the first step in CoA biosynthesis. The sequence is that of Type III pantothenate kinase from Streptomyces avermitilis (strain ATCC 31267 / DSM 46492 / JCM 5070 / NBRC 14893 / NCIMB 12804 / NRRL 8165 / MA-4680).